A 208-amino-acid polypeptide reads, in one-letter code: MIVVGIDEAGRGSLIGPMIVAGVAIKNDRLKFLKNIGVKDSKQLTRNRREKLFDIICSYSEGFTIVKVSPEEIDSENLNELTYKAMIKIIYSLVEFKPIRISIDKVGNTKVVEQEIIKLGMEPNIVTNADVYFVEASAASIIAKVIRDNIIDTLKSKYGDFGSGYPSDPKTVNWVKNVYKEYLTPPPIIRRSWKILQEIAPNYYIRKW.

The region spanning 1 to 205 (MIVVGIDEAG…LQEIAPNYYI (205 aa)) is the RNase H type-2 domain. A divalent metal cation is bound by residues Asp-7, Glu-8, and Asp-104.

Belongs to the RNase HII family. Mn(2+) is required as a cofactor. It depends on Mg(2+) as a cofactor.

The protein resides in the cytoplasm. The enzyme catalyses Endonucleolytic cleavage to 5'-phosphomonoester.. Functionally, endonuclease that specifically degrades the RNA of RNA-DNA hybrids. The chain is Ribonuclease HII from Sulfurisphaera tokodaii (strain DSM 16993 / JCM 10545 / NBRC 100140 / 7) (Sulfolobus tokodaii).